Consider the following 646-residue polypeptide: NADP-dependent malic enzyme 4, chloroplastic (646 aa).

The N-terminal 74 residues, 1–74, are a transit peptide targeting the chloroplast; that stretch reads MISLTPSLFL…LETSAADIVP (74 aa). Tyrosine 194 acts as the Proton donor in catalysis. NADP(+) is bound at residue arginine 247. Lysine 265 functions as the Proton acceptor in the catalytic mechanism. A divalent metal cation-binding residues include glutamate 337, aspartate 338, and aspartate 361. Residues aspartate 361, 390-406, and asparagine 502 each bind NADP(+); that span reads LFLG…ELIA.

The protein belongs to the malic enzymes family. In terms of assembly, homodimer and homotetramer. Mg(2+) is required as a cofactor. Requires Mn(2+) as cofactor. As to expression, expressed in leaves, stems, flowers and roots, mainly in vascular system. In roots, present in the stele, including the vascular tissue and the pericycle, mainly at emerging lateral roots and at root tips.

The protein localises to the plastid. Its subcellular location is the chloroplast. The enzyme catalyses (S)-malate + NADP(+) = pyruvate + CO2 + NADPH. The catalysed reaction is oxaloacetate + H(+) = pyruvate + CO2. It functions in the pathway photosynthesis; C3 acid pathway. Its function is as follows. The chloroplastic ME isoform decarboxylates malate shuttled from neighboring mesophyll cells. The CO(2) released is then refixed by ribulose-bisphosphate carboxylase. This pathway eliminates the photorespiratory loss of CO(2) that occurs in most plants. In Arabidopsis thaliana (Mouse-ear cress), this protein is NADP-dependent malic enzyme 4, chloroplastic (NADP-ME4).